The sequence spans 270 residues: Large ribosomal subunit protein bL21m (270 aa).

The N-terminal 68 residues, 1–68, are a transit peptide targeting the mitochondrion; that stretch reads MASLRCFREL…HWYRSQDRCF (68 aa). The interval 68–113 is disordered; it reads FSSNTKDTDEDEESSEGEDDDEEEGEDFEDSADMEVEREYSPAEKV. Positions 75-101 are enriched in acidic residues; it reads TDEDEESSEGEDDDEEEGEDFEDSADM. Residues 102-113 are compositionally biased toward basic and acidic residues; sequence EVEREYSPAEKV.

The protein belongs to the bacterial ribosomal protein bL21 family. Component of the mitochondrial ribosome large subunit. In terms of tissue distribution, constitutively expressed in roots, stems, leaves, flowers, pistils and siliques.

It is found in the mitochondrion. Its function is as follows. This protein binds to 23S ribosomal RNA in the presence of protein L20. Required for karyogamy during female gametophyte development, when the two polar nuclei fuse to form the diploid central cell nucleus, and during double fertilization of the egg cell and the central cell. The polypeptide is Large ribosomal subunit protein bL21m (Arabidopsis thaliana (Mouse-ear cress)).